Here is a 476-residue protein sequence, read N- to C-terminus: Zinc metalloproteinase/disintegrin (476 aa).

The signal sequence occupies residues 1–20 (MIQVLLVTICLAAFPYQGSS). The propeptide occupies 21–192 (IILESGNVND…ASQSNLTPEQ (172 aa)). Position 193 is a pyrrolidone carboxylic acid (glutamine 193). The region spanning 198–393 (RYIELAVVAD…HNPQCILNKP (196 aa)) is the Peptidase M12B domain. Glutamate 201 and aspartate 285 together coordinate Ca(2+). Disulfide bonds link cysteine 309–cysteine 388, cysteine 348–cysteine 372, and cysteine 350–cysteine 355. Histidine 334 contributes to the Zn(2+) binding site. The active site involves glutamate 335. Residues histidine 338 and histidine 344 each contribute to the Zn(2+) site. Residues cysteine 388 and asparagine 391 each contribute to the Ca(2+) site. A propeptide spanning residues 394-403 (LTTVSGNELL) is cleaved from the precursor. Residues 395 to 476 (TTVSGNELLE…ADCPRNRFHA (82 aa)) form the Disintegrin domain. Disulfide bonds link cysteine 409/cysteine 424, cysteine 411/cysteine 419, cysteine 418/cysteine 441, cysteine 432/cysteine 438, cysteine 437/cysteine 462, and cysteine 450/cysteine 469. The Cell attachment site signature appears at 454–456 (RGD).

Belongs to the venom metalloproteinase (M12B) family. P-II subfamily. P-IIa sub-subfamily. In terms of assembly, monomer (metalloprotease). The cofactor is Zn(2+). Post-translationally, the N-terminus is blocked. In terms of processing, not glycosylated. Expressed by the venom gland.

It localises to the secreted. With respect to regulation, inhibited by EDTA, and 1,10-phenanthroline, but not by PMSF. In terms of biological role, non-hemorrhagic proteinase that activates prothrombin (F2) calcium-independently. Activates factor X (F10) and hydrolyzes the Aalpha-chain and more slowly the Bbeta-chain of fibrin and fibrinogen without affecting the gamma chain. It induces neither detachment nor apoptosis of human endothelial cells and is also not able to trigger an endothelial pro-inflammatory cell response. Nitric oxide and prostacyclin levels released by endothelial cells are significantly increased after treatment with insularinase A. Inhibits ADP-induced platelet aggregation (IC(50)=0.8 uM for native protein). Interestingly, inhibits the adhesion of HUVECs to immobilized fibrinogen at very low concentrations (IC(50)=36 nM). The protein is Zinc metalloproteinase/disintegrin of Bothrops insularis (Golden lancehead).